The sequence spans 251 residues: Chlorophyll a-b binding protein 4, chloroplastic (251 aa).

The residue at position 35 (S35) is a Phosphoserine. Residue W57 participates in chlorophyll b binding. Chlorophyll a-binding residues include F77 and E96. R101 lines the chlorophyll b pocket. A run of 2 helical transmembrane segments spans residues 102 to 122 (WAML…IGII) and 135 to 155 (YFAS…YVEI). S138, V144, E154, and R157 together coordinate chlorophyll b. Chlorophyll a is bound by residues K204, E205, N208, R210, Q222, and H237.

The protein belongs to the light-harvesting chlorophyll a/b-binding (LHC) protein family. As to quaternary structure, the LHC complex consists of chlorophyll a-b binding proteins. Red-emitting heterodimer with LHCA1. The cofactor is Binds at least 14 chlorophylls (8 Chl-a and 6 Chl-b) and carotenoids such as lutein and neoxanthin.. Post-translationally, photoregulated by reversible phosphorylation of its threonine residues.

The protein resides in the plastid. It is found in the chloroplast thylakoid membrane. The light-harvesting complex (LHC) functions as a light receptor, it captures and delivers excitation energy to photosystems with which it is closely associated. The polypeptide is Chlorophyll a-b binding protein 4, chloroplastic (Arabidopsis thaliana (Mouse-ear cress)).